The primary structure comprises 915 residues: Clathrin coat assembly protein AP180 (915 aa).

In terms of domain architecture, ENTH spans 14–145; sequence QYSVTGSAVA…FSYRQMAFDF (132 aa). Disordered regions lie at residues 285 to 326, 391 to 425, and 497 to 522; these read LEGK…DTSP, SVPS…ATTA, and PETS…PSPA. 3 positions are modified to phosphoserine: S296, S300, and S306. Positions 302 to 324 are enriched in polar residues; the sequence is LSKSSPATTVTSPNSTPAKTIDT. Residue T310 is glycosylated (O-linked (GlcNAc) threonine). S313 carries the phosphoserine modification. T317 bears the Phosphothreonine mark. Composition is skewed to low complexity over residues 410–425 and 500–511; these read TTTT…ATTA and SAPVVTPTASTA. Positions 512–522 are enriched in pro residues; it reads PPVPATAPSPA. A phosphoserine mark is found at S594, S600, P627, S640, and S646. Over residues 720–735 the composition is skewed to low complexity; it reads TTPSTSSSSSFDPSGD. The tract at residues 720–765 is disordered; sequence TTPSTSSSSSFDPSGDLLMPTMAPSGQPAPVSMVPPSPAMSASKGL. A Phosphoserine modification is found at S775. The disordered stretch occupies residues 817 to 855; sequence SAGVPPQGTVPPTSSVPPGAGAPSVGQPGAGYGMPPAGT. R873 is modified (asymmetric dimethylarginine; alternate). R873 is subject to Omega-N-methylarginine; alternate. Residues 875–915 form a disordered region; the sequence is PFGAAAVPGTQLSPSPTPATQSPKKPPAKDPLADLNIKDFL. Residues 884–896 show a composition bias toward polar residues; sequence TQLSPSPTPATQS. Positions 901 to 915 are enriched in basic and acidic residues; the sequence is PAKDPLADLNIKDFL.

The protein belongs to the PICALM/SNAP91 family. Binds AP2A2. Interacts with AP2B1; clathrin competes with SNAP91. Thr-310 can be modified by the addition of N-acetylglucosamine which can be further phosphorylated. The form with phosphorylated O-linked N-acetylglucosamine is predominant in brain synaptosomes. There is no evidence for direct Thr-310 phosphorylation.

The protein resides in the cell membrane. The protein localises to the membrane. It localises to the coated pit. Its function is as follows. Adaptins are components of the adapter complexes which link clathrin to receptors in coated vesicles. Clathrin-associated protein complexes are believed to interact with the cytoplasmic tails of membrane proteins, leading to their selection and concentration. Binding of AP180 to clathrin triskelia induces their assembly into 60-70 nm coats. The sequence is that of Clathrin coat assembly protein AP180 (Snap91) from Rattus norvegicus (Rat).